The primary structure comprises 2116 residues: MEKLLDEVLAPGGPYNLTVGSWVRDHVRSIVEGAWEVRDVVTAAQKRAIVAVIPRPVFTQMQVSDHPALHAISRYTRRHWIEWGPKEALHVLIDPSPGLLREVARVERRWVALCLHRTARKLATALAETAGEAWHADYVCALRGAPSGPFYVHPEDVPRGGRAVADRCLLYYTPMQMCELMRTIDATLLVAVDLWPVALAAHVGDDWDDLGIAWHLDHDGGCPADCRGAGAGPMPGYTRPCTTRIYQVLPDTAHPGRLYRCGPRLWTRDCAVAELSWEVAQHCGHQARVRAVRCTLPIRHVRSLQPSARVRLPDLVHLAEVGRWRWFSLPRPVFQRMLSYCKTLSPDAYYSERVFKFKNALSHSITLAGNVLQEGWKGTCAEEDALCAYVAFRAWQSNARLAGVMKGAKRCAADSLSVAGWLGTVWDAIKRFFGSVPLAERMEEWEQDAAVAAFDRGPLEDGGHHLDTVQPPKPLPRPEIAATWIVHAASADRHCACAPRCDVPRERPSAPAGPPDDEAIIPPWLFAECRTLRCREWDFEALRARADTAATPAPLAPRPARHPTVLYRHPAHHGPWLTLDEPGEADAALVLCDPLGQPLRGPERHFAVGAHMCAQARGLQAFVRVVPPPERPWADGGARTWAKFFRGCAWAQRLLGEPAVMHLPYTDGDVPQLIALALRTLAQQGAALALSVRDLPGGAAFDANAVTAAVRADPGQLALTSPPPDNPPPPRRARRSQRHADARGPPPPAPARDPPPPAPSPPAPPRAGDPASPISAEPADRARDAEPEVACEPGGPATPARADPDSDIVESYARAAGPVHLRVRNIMDPPPGCKVVVNAANEGLLAGSGVCGAIFASAAASLAEDCRRLAPCPTGEAVATPGHGCGYAHIIHAVAPRRPQDPAALEQSEALLERAYRSIVALAAARRWTCVACPLLGAGIYGWSAAESLRAALAAARTEPAERVSLHICHPDRATLMHASVLVGAGLAARRVSPPPTEPPASRPADDPGRSAQRTAPPPAAPPGDAAAPELRGCQGCELCRYTRVTNDRAYVNLWLERDRGATGWAMRIPEVVVYGPEHLAAHFPLNHYSVLKPAEVRPPRGMCGSDMWRCRGWQGMPQVRCTPSNAHAALCRIGIPPRVSTRGDERDPNTCWLRAAANVAQAARACGAYTSAGCPKCAYGRALSEARTHEDFAALSQRWIASHADASLDGTGDPLDPLMATVGCACSRVWVGSEHEAPPDHLLVSLHRAPNGPWGVVLEVRARPEGGNPTGHFVCAVGGGPRRVSDRPHLWLAVPLSRGGGTCAATDEGLAQAYYDDLEVRRLGDDAMARAALASVQRPRKGPYNIKVWNMAAGAGKTTRILAAFTREDLYVCPTNALLHEIQAKLRARDIDIKNAATYERALTKPLAAYRRIYIDEAFTLGGEYCAFVASQTTAEVICVGDRDQCGPHYANNCRTPVPDRWPTERSRHTWRFPDCWAARLRAGLDYDVEGEHAGTFACNLWDGRQVDLHLAFSRETVRRLHEAGIRAYTVREAQGMSVGTACIHVGRDGTDVALALTRDLAIVSLTRASDALYLHELEDGSLRAAGLSAFLDAGALAELKEVPAGIDRVVAVEQAPPPLPPADGIPEAQDVPPFCPRTLEELVFGRAGHPHYADLNRVTEGEREVRYMRISRHLLNKNHTEMPGTERVLSAVCAVRRYRAGEDGSTLRTAVARQHPRPFRQIPPPRVTAGVAQEWRMTYLRERIDLTDVYTQMGVAARELTDRYARRYPEIFAGMCTAQSLSVPAFLKATLKCVDAALGPRDTEDCHAAQGKAGLEIRAWAKEWVQVMSPHFRAIQKIIMRALRPQFLVAAGHTEPEVDAWWQAHYTTNAIEVDFTEFDMNQTLATRDVELEISAALLGLPCAEDYRALRAGSYCTLRELGSTETGCERTSGEPATLLHNTTVAMCMAMRMVPKGVRWAGIFQGDDMVIFLPEGARSAALKWTPSEVGLFGSHIPVKHVSTPTPSFCGHVGTAAGLFHDVMHQAIKVLCRRFDPDVLEEQQVALLDRLRGVYAALPDTVAANAAYYDYSAERVLAIVRELTAYARGRGLDHPATIGALEEIQTPYARANLHDAD.

A required for efficient proteolysis and P150-P90 interaction region spans residues 36-49; sequence EVRDVVTAAQKRAI. Residues 57–247 form the Alphavirus-like MT domain; that stretch reads VFTQMQVSDH…TRPCTTRIYQ (191 aa). The interval 715 to 805 is disordered; it reads GQLALTSPPP…PATPARADPD (91 aa). 2 stretches are compositionally biased toward pro residues: residues 721–730 and 744–767; these read SPPPDNPPPP and GPPP…PPRA. 3 consecutive short sequence motifs (pxxPxR; class II SH3-binding) follow at residues 727 to 732, 747 to 752, and 761 to 766; these read PPPPRR, PPAPAR, and PPAPPR. A Macro domain is found at 806 to 985; that stretch reads SDIVESYARA…LMHASVLVGA (180 aa). A disordered region spans residues 990 to 1028; it reads RRVSPPPTEPPASRPADDPGRSAQRTAPPPAAPPGDAAA. Residues 993–1002 are compositionally biased toward pro residues; sequence SPPPTEPPAS. Residues 1000-1301 form the Peptidase C27 domain; sequence PASRPADDPG…WLAVPLSRGG (302 aa). C1152 (for cysteine protease activity) is an active-site residue. The tract at residues 1152-1183 is interaction with host CALM1; sequence CWLRAAANVAQAARACGAYTSAGCPKCAYGRA. 4 residues coordinate Zn(2+): C1175, C1178, C1227, and H1273. Residues 1193–1228 are EF-hand-like; that stretch reads FAALSQRWIASHADASLDGTGDPLDPLMATVGCACS. Residue H1273 is the For cysteine protease activity of the active site. Residues 1320-1468 enclose the (+)RNA virus helicase ATP-binding domain; it reads EVRRLGDDAM…VPDRWPTERS (149 aa). 1352–1359 contacts a ribonucleoside 5'-triphosphate; the sequence is MAAGAGKT. The 141-residue stretch at 1469–1609 folds into the (+)RNA virus helicase C-terminal domain; sequence RHTWRFPDCW…ELKEVPAGID (141 aa). The tract at residues 1700–1900 is involved in P150-P90 interaction; sequence YRAGEDGSTL…VELEISAALL (201 aa). The RdRp catalytic domain maps to 1870–1981; it reads TNAIEVDFTE…FLPEGARSAA (112 aa). A Human RB1 binding motif is present at residues 1902–1906; the sequence is LPCAE.

Interacts with RNA-directed RNA polymerase p90. Interacts with host CALM1; this interaction is necessary for the protease activity and viral infectivity. Interacts with host C1QBP. Interacts with the capsid protein. As to quaternary structure, interacts with human RB1/retinoblastoma protein. Interacts with protease/methyltransferase p150. Zn(2+) is required as a cofactor. Post-translationally, specific enzymatic cleavage by its own cysteine protease yield mature proteins p150 and p90.

The protein resides in the host membrane. Its subcellular location is the host cytoplasm. The protein localises to the host perinuclear region. It carries out the reaction RNA(n) + a ribonucleoside 5'-triphosphate = RNA(n+1) + diphosphate. The enzyme catalyses a ribonucleoside 5'-triphosphate + H2O = a ribonucleoside 5'-diphosphate + phosphate + H(+). It catalyses the reaction ATP + H2O = ADP + phosphate + H(+). In terms of biological role, probable principal replicase for the negative-strand DNA, which replicates the 40S (+) genomic RNA into (-) antigenomic RNA. It cannot replicate the (-) into (+) until cleaved into p150 and p90 mature proteins. Functionally, protease that cleaves the precursor polyprotein into two mature products. Together with RNA-directed RNA polymerase p90, replicates the 40S genomic and antigenomic RNA by recognizing replications specific signals. The heterodimer P150/p90 is probably the principal replicase for positive-strand genomic RNA and the 24S subgenomic RNA, which codes for structural proteins. Responsible for the mRNA-capping of the viral mRNAs. This function is necessary since all viral RNAs are synthesized in the cytoplasm, and host capping enzymes are restricted to the nucleus. Forms fibers late in the infection that may be involved in cell-to-cell spread of the virus RNA in the absence of virus particle formation. Its function is as follows. Together with protease/methyltransferase p150, replicates the 40S genomic and antigenomic RNA by recognizing replications specific signals. The heterodimer P150/p90 is probably the principal replicase for positive-strand genomic RNA and the 24S subgenomic RNA, which codes for structural proteins. A helicase activity is probably also present. This is Non-structural polyprotein p200 from Rubella virus (strain BRDII) (RUBV).